A 268-amino-acid chain; its full sequence is Nickel import ATP-binding protein NikE (268 aa).

The ABC transporter domain maps to 4–252; that stretch reads LNVSDLSHHY…SSDAGRVLQN (249 aa). Residue 45-52 participates in ATP binding; that stretch reads GRSGCGKS.

It belongs to the ABC transporter superfamily. Nickel importer (TC 3.A.1.5.3) family. As to quaternary structure, the complex is composed of two ATP-binding proteins (NikD and NikE), two transmembrane proteins (NikB and NikC) and a solute-binding protein (NikA).

It is found in the cell inner membrane. The catalysed reaction is Ni(2+)(out) + ATP + H2O = Ni(2+)(in) + ADP + phosphate + H(+). Part of the ABC transporter complex NikABCDE involved in nickel import. Responsible for energy coupling to the transport system. The chain is Nickel import ATP-binding protein NikE from Escherichia coli O6:K15:H31 (strain 536 / UPEC).